We begin with the raw amino-acid sequence, 942 residues long: Leucine--tRNA ligase 1 (942 aa).

The 'HIGH' region motif lies at 39-49 (PYTNSPLHIGH). Residues 624–628 (KMSKS) carry the 'KMSKS' region motif. Residue lysine 627 coordinates ATP.

It belongs to the class-I aminoacyl-tRNA synthetase family.

It is found in the cytoplasm. The catalysed reaction is tRNA(Leu) + L-leucine + ATP = L-leucyl-tRNA(Leu) + AMP + diphosphate. This is Leucine--tRNA ligase 1 from Sulfolobus acidocaldarius (strain ATCC 33909 / DSM 639 / JCM 8929 / NBRC 15157 / NCIMB 11770).